Reading from the N-terminus, the 392-residue chain is Mitochondrial distribution and morphology protein 10 (392 aa).

It belongs to the MDM10 family. In terms of assembly, component of the ER-mitochondria encounter structure (ERMES) or MDM complex, composed of MMM1, MDM10, MDM12 and MDM34. Associates with the mitochondrial outer membrane sorting assembly machinery SAM(core) complex.

The protein localises to the mitochondrion outer membrane. Its function is as follows. Component of the ERMES/MDM complex, which serves as a molecular tether to connect the endoplasmic reticulum and mitochondria. Components of this complex are involved in the control of mitochondrial shape and protein biogenesis and may function in phospholipid exchange. MDM10 is involved in the late assembly steps of the general translocase of the mitochondrial outer membrane (TOM complex). Functions in the TOM40-specific route of the assembly of outer membrane beta-barrel proteins, including the association of TOM40 with the receptor TOM22 and small TOM proteins. Can associate with the SAM(core) complex as well as the MDM12-MMM1 complex, both involved in late steps of the major beta-barrel assembly pathway, that is responsible for biogenesis of all outer membrane beta-barrel proteins. May act as a switch that shuttles between both complexes and channels precursor proteins into the TOM40-specific pathway. Plays a role in mitochondrial morphology and in the inheritance of mitochondria. In Phaeosphaeria nodorum (strain SN15 / ATCC MYA-4574 / FGSC 10173) (Glume blotch fungus), this protein is Mitochondrial distribution and morphology protein 10.